A 421-amino-acid chain; its full sequence is Functional amyloid transporter FapF (421 aa).

The N-terminal stretch at 1 to 24 (MTQTLSLRAVLCATTLVSPFLAQA) is a signal peptide. The stretch at 23–64 (QAATESEVEALKKELLELRQRYEAQQNALMVLEQRVRQVEAQ) forms a coiled coil.

Belongs to the amyloid transporter (TC 9.B.153) family.

The protein resides in the secreted. The protein localises to the cell surface. It is found in the cell outer membrane. Transports fibril components across the outer membrane. Upon overexpression of the endogenous six-gene locus (fapA-fapF), cells form large clumps during liquid growth, make large amounts of biofilm and produce amyloid fibrils. The protein is Functional amyloid transporter FapF of Pseudomonas aeruginosa (strain ATCC 15692 / DSM 22644 / CIP 104116 / JCM 14847 / LMG 12228 / 1C / PRS 101 / PAO1).